A 319-amino-acid chain; its full sequence is Pantothenate kinase (319 aa).

Residue 96–103 (GSVAVGKS) coordinates ATP.

This sequence belongs to the prokaryotic pantothenate kinase family.

It is found in the cytoplasm. The catalysed reaction is (R)-pantothenate + ATP = (R)-4'-phosphopantothenate + ADP + H(+). It participates in cofactor biosynthesis; coenzyme A biosynthesis; CoA from (R)-pantothenate: step 1/5. The chain is Pantothenate kinase (coaA) from Bacillus subtilis (strain 168).